The following is a 945-amino-acid chain: Argonaute protein wago-1 (945 aa).

Residues 1 to 20 (MSPHPPQPHPPMPPMPPVTA) show a composition bias toward pro residues. Residues 1–41 (MSPHPPQPHPPMPPMPPVTAPPGAMTPMPPVPADAQKLHQS) form a disordered region. Residues 322-432 (TVIQKLFDIT…FPAELMTVSR (111 aa)) enclose the PAZ domain. The region spanning 636 to 899 (VKDGKRLTLE…PLYVANEYAK (264 aa)) is the Piwi domain.

The protein belongs to the Argonaute family. WAGO subfamily. Interacts with rde-12. Interacts with znfx-1. In terms of tissue distribution, enriched in sperm and oocytes.

The protein resides in the cytoplasmic granule. Functionally, argonaute protein which is involved in the endogenous small interfering RNA (endo-siRNA) pathway. Interacts with secondary 22G-RNAs, which are RNA-dependent RNA polymerase-derived endo-siRNAs, typically 22 nucleotides in length with a 5'guanosine residue. In the germline, functions in a genome surveillance system to silence transposons and aberrant transcripts. The sequence is that of Argonaute protein wago-1 from Caenorhabditis elegans.